The chain runs to 876 residues: DNA mismatch repair protein MutS (876 aa).

628-635 is a binding site for ATP; it reads GPNMAGKS.

It belongs to the DNA mismatch repair MutS family.

In terms of biological role, this protein is involved in the repair of mismatches in DNA. It is possible that it carries out the mismatch recognition step. This protein has a weak ATPase activity. This chain is DNA mismatch repair protein MutS, found in Chlorobaculum parvum (strain DSM 263 / NCIMB 8327) (Chlorobium vibrioforme subsp. thiosulfatophilum).